We begin with the raw amino-acid sequence, 156 residues long: Small ribosomal subunit protein uS7 (156 aa).

It belongs to the universal ribosomal protein uS7 family. Part of the 30S ribosomal subunit. Contacts proteins S9 and S11.

In terms of biological role, one of the primary rRNA binding proteins, it binds directly to 16S rRNA where it nucleates assembly of the head domain of the 30S subunit. Is located at the subunit interface close to the decoding center, probably blocks exit of the E-site tRNA. In Frankia casuarinae (strain DSM 45818 / CECT 9043 / HFP020203 / CcI3), this protein is Small ribosomal subunit protein uS7.